The primary structure comprises 319 residues: Malate dehydrogenase (319 aa).

NAD(+) is bound by residues 10-15 (GAGNIG) and aspartate 34. 2 residues coordinate substrate: arginine 83 and arginine 89. Residues asparagine 96 and 119–121 (ITN) contribute to the NAD(+) site. Residues asparagine 121 and arginine 152 each contribute to the substrate site. Histidine 176 acts as the Proton acceptor in catalysis.

It belongs to the LDH/MDH superfamily. MDH type 3 family.

The enzyme catalyses (S)-malate + NAD(+) = oxaloacetate + NADH + H(+). Functionally, catalyzes the reversible oxidation of malate to oxaloacetate. This Francisella tularensis subsp. holarctica (strain FTNF002-00 / FTA) protein is Malate dehydrogenase.